Here is a 156-residue protein sequence, read N- to C-terminus: Snaclec subunit B (156 aa).

Residues 1-23 form the signal peptide; sequence MGRSIFVNLGLLVVAFSLRGSEA. Intrachain disulfides connect Cys-25-Cys-36, Cys-53-Cys-144, and Cys-119-Cys-136. Residues 32–145 form the C-type lectin domain; the sequence is YDKYCYKVFD…CKSTLPFTCK (114 aa).

The protein belongs to the snaclec family. As to quaternary structure, heterodimer of subunits A and B; disulfide-linked. As to expression, expressed by the venom gland.

The protein localises to the secreted. Functionally, interferes with one step of hemostasis (modulation of platelet aggregation, or coagulation cascade, for example). In Philodryas olfersii (Green snake), this protein is Snaclec subunit B.